The following is a 549-amino-acid chain: Glucose-6-phosphate isomerase (549 aa).

Residues Lys-80, Lys-228, and Lys-234 each carry the N6-acetyllysine modification. Glu-355 (proton donor) is an active-site residue. Residues His-386 and Lys-514 contribute to the active site.

It belongs to the GPI family.

Its subcellular location is the cytoplasm. The enzyme catalyses alpha-D-glucose 6-phosphate = beta-D-fructose 6-phosphate. It participates in carbohydrate biosynthesis; gluconeogenesis. The protein operates within carbohydrate degradation; glycolysis; D-glyceraldehyde 3-phosphate and glycerone phosphate from D-glucose: step 2/4. Catalyzes the reversible isomerization of glucose-6-phosphate to fructose-6-phosphate. The chain is Glucose-6-phosphate isomerase from Escherichia fergusonii (strain ATCC 35469 / DSM 13698 / CCUG 18766 / IAM 14443 / JCM 21226 / LMG 7866 / NBRC 102419 / NCTC 12128 / CDC 0568-73).